We begin with the raw amino-acid sequence, 455 residues long: Transcriptional regulatory protein FlbD (455 aa).

The region spanning 2–114 is the Response regulatory domain; sequence RLLVVGKLNG…LIAAVLAAVT (113 aa). The Sigma-54 factor interaction domain maps to 120–349; the sequence is MVVRDPAMEQ…LENAMHRAVL (230 aa). ATP contacts are provided by residues 148–155 and 211–220; these read GESGSGKE and ADGGTLLLDE. The segment at residues 416–435 is a DNA-binding region (H-T-H motif); that stretch reads RTHAANILGISIRTLRNKLK.

It localises to the cytoplasm. In terms of biological role, activation of sigma-54-dependent flagellar gene promoters and strong negative autoregulatory effects on its own promoter. The synthesis and function of FlbD in C.crescentus is controlled by an internal cell-cycle clock. The chain is Transcriptional regulatory protein FlbD (flbD) from Caulobacter vibrioides (strain ATCC 19089 / CIP 103742 / CB 15) (Caulobacter crescentus).